The chain runs to 138 residues: MNTETKPLPAWLDKVRWDDNGLVPVIAQEASTNDVLMFAWMNREALAKTIETQRAVYYSRSRKRLWFKGEESGHVQHVHEVRLDCDEDVVLLKVEQVSGIACHTGRHSCFFQKFEGTVDAGDWVAVDPVLKDPEHIYK.

Aspartate 84 is a binding site for Mg(2+). Residue cysteine 85 coordinates Zn(2+). Mg(2+) is bound by residues aspartate 86 and aspartate 88. Zn(2+)-binding residues include cysteine 102 and cysteine 109.

This sequence belongs to the PRA-CH family. Homodimer. Mg(2+) is required as a cofactor. It depends on Zn(2+) as a cofactor.

It is found in the cytoplasm. It catalyses the reaction 1-(5-phospho-beta-D-ribosyl)-5'-AMP + H2O = 1-(5-phospho-beta-D-ribosyl)-5-[(5-phospho-beta-D-ribosylamino)methylideneamino]imidazole-4-carboxamide. Its pathway is amino-acid biosynthesis; L-histidine biosynthesis; L-histidine from 5-phospho-alpha-D-ribose 1-diphosphate: step 3/9. Its function is as follows. Catalyzes the hydrolysis of the adenine ring of phosphoribosyl-AMP. The protein is Phosphoribosyl-AMP cyclohydrolase of Burkholderia multivorans (strain ATCC 17616 / 249).